Reading from the N-terminus, the 910-residue chain is Translation factor GUF1 homolog, mitochondrial (910 aa).

Residues 126–188 (RRGNGLPFER…DGGGAPEHPQ (63 aa)) are disordered. The 178-residue stretch at 189–366 (QNVRNFCILA…RIVSDIPCPA (178 aa)) folds into the tr-type G domain. Residues 198–205 (AHIDSGKS), 259–263 (DTPGH), and 313–316 (NKID) each bind GTP. The segment at 639 to 683 (GSGDGRADGSADGSADGSADGSGDSSAHGSSDRRGAGCARGSDDI) is disordered. Residues 646-667 (DGSADGSADGSADGSGDSSAHG) show a composition bias toward low complexity.

This sequence belongs to the TRAFAC class translation factor GTPase superfamily. Classic translation factor GTPase family. LepA subfamily.

The protein localises to the mitochondrion inner membrane. The catalysed reaction is GTP + H2O = GDP + phosphate + H(+). Functionally, promotes mitochondrial protein synthesis. May act as a fidelity factor of the translation reaction, by catalyzing a one-codon backward translocation of tRNAs on improperly translocated ribosomes. Binds to mitochondrial ribosomes in a GTP-dependent manner. This Plasmodium vivax (strain Salvador I) protein is Translation factor GUF1 homolog, mitochondrial.